The following is a 266-amino-acid chain: Ribonuclease 3 (266 aa).

An RNase III domain is found at 8–130 (LARLTKKLGY…IIGAVYLDSN (123 aa)). Glu-43 provides a ligand contact to Mg(2+). Residue Asp-47 is part of the active site. Asp-116 and Glu-119 together coordinate Mg(2+). Glu-119 is an active-site residue. The region spanning 157–227 (DPKTRLQEFL…AQQILALIEK (71 aa)) is the DRBM domain. The disordered stretch occupies residues 229–266 (REQEKEVKIKPTKQAKLANPRHTKSNPSSSSKKSSTRK). Residues 253 to 266 (SNPSSSSKKSSTRK) show a composition bias toward low complexity.

The protein belongs to the ribonuclease III family. In terms of assembly, homodimer. It depends on Mg(2+) as a cofactor.

The protein localises to the cytoplasm. The catalysed reaction is Endonucleolytic cleavage to 5'-phosphomonoester.. Its function is as follows. Digests double-stranded RNA. Involved in the processing of primary rRNA transcript to yield the immediate precursors to the large and small rRNAs (23S and 16S). Processes some mRNAs, and tRNAs when they are encoded in the rRNA operon. Processes pre-crRNA and tracrRNA of type II CRISPR loci if present in the organism. This is Ribonuclease 3 from Colwellia psychrerythraea (strain 34H / ATCC BAA-681) (Vibrio psychroerythus).